A 132-amino-acid polypeptide reads, in one-letter code: Small ribosomal subunit protein eS12 (132 aa).

At Ala2 the chain carries N-acetylalanine. Lys129 bears the N6-succinyllysine mark.

Belongs to the eukaryotic ribosomal protein eS12 family. In terms of assembly, part of the small subunit (SSU) processome, composed of more than 70 proteins and the RNA chaperone small nucleolar RNA (snoRNA) U3. Subunit of the 40S ribosomal complex.

The protein resides in the nucleus. It localises to the nucleolus. Part of the small subunit (SSU) processome, first precursor of the small eukaryotic ribosomal subunit. During the assembly of the SSU processome in the nucleolus, many ribosome biogenesis factors, an RNA chaperone and ribosomal proteins associate with the nascent pre-rRNA and work in concert to generate RNA folding, modifications, rearrangements and cleavage as well as targeted degradation of pre-ribosomal RNA by the RNA exosome. Subunit of the 40S ribosomal complex. The polypeptide is Small ribosomal subunit protein eS12 (Rps12) (Rattus norvegicus (Rat)).